Consider the following 246-residue polypeptide: MSESDRLFAQPQQRVADFVFNEDVVRVFPDMIKRSVPGYPTIVENIGVLGAQFAQPNSVLYDLGCSLGAVTQSLRRHVRNDGCRVIGVDNSHAMIERCSEYLHAQDAMYQELLPVELIEADILALDLQPTSLVAMNFTLQFVAPDQRLGLLRRIRQALLPGGALILSEKLRFADAQEHALLTDLHIAFKRANGYSELEIAQKRSALENVMLPDTFEEHRERLLAAGFSRVSQWFQCLNFASMIALP.

Residues tyrosine 39, 64-66, 89-90, 121-122, asparagine 136, and arginine 203 contribute to the S-adenosyl-L-methionine site; these read GCS, DN, and DI.

It belongs to the class I-like SAM-binding methyltransferase superfamily. Cx-SAM synthase family. As to quaternary structure, homodimer.

The enzyme catalyses prephenate + S-adenosyl-L-methionine = carboxy-S-adenosyl-L-methionine + 3-phenylpyruvate + H2O. Functionally, catalyzes the conversion of S-adenosyl-L-methionine (SAM) to carboxy-S-adenosyl-L-methionine (Cx-SAM). The chain is Carboxy-S-adenosyl-L-methionine synthase from Pseudomonas aeruginosa (strain UCBPP-PA14).